The sequence spans 393 residues: Stearoyl-[acyl-carrier-protein] 9-desaturase, chloroplastic (393 aa).

The N-terminal 30 residues, 1–30, are a transit peptide targeting the chloroplast; sequence MALNFNSPTFQSIKTTRRPCSPLRSPRVFM. Residues Glu135, Glu173, His176, Glu226, Glu259, and His262 each contribute to the Fe cation site.

Belongs to the fatty acid desaturase type 2 family. Homodimer. Fe(2+) serves as cofactor.

The protein resides in the plastid. It is found in the chloroplast. The catalysed reaction is octadecanoyl-[ACP] + 2 reduced [2Fe-2S]-[ferredoxin] + O2 + 2 H(+) = (9Z)-octadecenoyl-[ACP] + 2 oxidized [2Fe-2S]-[ferredoxin] + 2 H2O. The protein operates within lipid metabolism; fatty acid metabolism. Functionally, converts stearoyl-ACP to oleoyl-ACP by introduction of a cis double bond between carbons 9 and 10 of the acyl chain. This is Stearoyl-[acyl-carrier-protein] 9-desaturase, chloroplastic from Solanum commersonii (Commerson's wild potato).